Here is a 252-residue protein sequence, read N- to C-terminus: Pyrroloquinoline-quinone synthase (252 aa).

The protein belongs to the PqqC family.

It carries out the reaction 6-(2-amino-2-carboxyethyl)-7,8-dioxo-1,2,3,4,7,8-hexahydroquinoline-2,4-dicarboxylate + 3 O2 = pyrroloquinoline quinone + 2 H2O2 + 2 H2O + H(+). It functions in the pathway cofactor biosynthesis; pyrroloquinoline quinone biosynthesis. Its function is as follows. Ring cyclization and eight-electron oxidation of 3a-(2-amino-2-carboxyethyl)-4,5-dioxo-4,5,6,7,8,9-hexahydroquinoline-7,9-dicarboxylic-acid to PQQ. The sequence is that of Pyrroloquinoline-quinone synthase from Acinetobacter baumannii (strain AB307-0294).